Here is a 532-residue protein sequence, read N- to C-terminus: Phosphoenolpyruvate carboxykinase (ATP) (532 aa).

The substrate site is built by Arg-60, Tyr-194, and Lys-200. Residues Lys-200, His-219, and Gly-237 to Thr-245 contribute to the ATP site. The Mn(2+) site is built by Lys-200 and His-219. Position 258 (Asp-258) interacts with Mn(2+). Positions 286, 324, and 449 each coordinate ATP. Arg-324 lines the substrate pocket.

This sequence belongs to the phosphoenolpyruvate carboxykinase (ATP) family. Mn(2+) is required as a cofactor.

It localises to the cytoplasm. The catalysed reaction is oxaloacetate + ATP = phosphoenolpyruvate + ADP + CO2. The protein operates within carbohydrate biosynthesis; gluconeogenesis. Involved in the gluconeogenesis. Catalyzes the conversion of oxaloacetate (OAA) to phosphoenolpyruvate (PEP) through direct phosphoryl transfer between the nucleoside triphosphate and OAA. The sequence is that of Phosphoenolpyruvate carboxykinase (ATP) from Cereibacter sphaeroides (strain ATCC 17029 / ATH 2.4.9) (Rhodobacter sphaeroides).